A 509-amino-acid chain; its full sequence is MWRLTGILGRALPRLLGPGFRGITPKPTSSDGPQTTSTTLPLPRVNFDRSGSHGSKRNRDPKCCGWKEAFHWMSAHVSPNTLRDAVSWGTLAVLALHLARQIHFHAPLVAGPQSAERCSWHSPLYRFLSSSWWHPHSSLRRHVLPSPDCPAPRNTGLREPRLGQEEPAARSQGLPSDSSLKPGLLNLPEEEPSDFGFLNASRDFTSQAKAAEAGPPGGKNEQDKPKALPLEEAVTSIQQLFQLSVAIAFNFLGTENIKTGDYTAAFSYFQKAADRGYSKAQYNVGLCLEHGRGTPRDLSKAVLFYHLAAVQGHSLAQYRYARCLLQSPGSMSDPERQRAVSLLKQAADSGLTEAQAFLGVLFTKEPHLDEQKAVKYFWLAASNGDSQSRFHLGICYEKGLGVQRNLGEAVKCYQKSAAMGNEPAQERLRTLFNVEAAGPSHLAIGLKSFSSPSLCSLNTFLAGASGLPHASSTGNLGLLCRSGHLGTSHGAPSRAMPSLERSLVRLGFG.

The transit peptide at 1–23 directs the protein to the mitochondrion; that stretch reads MWRLTGILGRALPRLLGPGFRGI. 2 disordered regions span residues 19 to 60 and 143 to 185; these read GFRG…RNRD and VLPS…PGLL. Residues 24–101 constitute a propeptide, extended MTS; it reads TPKPTSSDGP…AVLALHLARQ (78 aa). Positions 26-40 are enriched in polar residues; it reads KPTSSDGPQTTSTTL. Basic and acidic residues-rich tracts occupy residues 46–60 and 156–168; these read NFDRSGSHGSKRNRD and GLREPRLGQEEPA. TPR repeat units follow at residues 213-245, 246-278, 279-313, 314-351, 352-385, 386-423, and 470-498; these read AGPPGGKNEQDKPKALPLEEAVTSIQQLFQLSV, AIAFNFLGTENIKTGDYTAAFSYFQKAADRGYS, KAQYNVGLCLEHGRGTPRDLSKAVLFYHLAAVQGH, SLAQYRYARCLLQSPGSMSDPERQRAVSLLKQAADSGL, TEAQAFLGVLFTKEPHLDEQKAVKYFWLAASNGD, SQSRFHLGICYEKGLGVQRNLGEAVKCYQKSAAMGNEP, and ASSTGNLGLLCRSGHLGTSHGAPSRAMPS. The short motif at 307–326 is the SIFI-degron element; it reads LAAVQGHSLAQYRYARCLLQ.

The protein belongs to the DELE1 family. In terms of assembly, interacts with DAP3. Interacts (via TPR repeats) with EIF2AK1/HRI; activating the protein kinase activity of EIF2AK1/HRI, thereby promoting the integrated stress response (ISR). As to quaternary structure, homooctamer; oligomerization is required to activate EIF2AK1/HRI. Interacts (via TPR repeats) with EIF2AK1/HRI; activating the protein kinase activity of EIF2AK1/HRI, thereby promoting the integrated stress response (ISR). Post-translationally, unstable protein in absence of stress: imported in the mitochondrial matrix following processing by the mitochondrial-processing peptidase (MPP), where it is degraded by LONP1. Stabilized in response to iron deficiency: iron deficiency impairs mitochondrial import, promoting localization at the mitochondrial surface and stabilization. Cleaved by OMA1 in response to mitochondrial stress, generating the DAP3-binding cell death enhancer 1 short form (DELE1(S) or S-DELE1) that accumulates in the cytosol and activates the protein kinase activity of EIF2AK1/HRI. Protein cleavage by OMA1 can take place at different positions, and apparently does not require a specific sequence motif. Ubiquitinated and degraded by the SIFI complex once the mitochondrial stress has been resolved, thereby providing stress response silencing. Within the SIFI complex, UBR4 initiates ubiquitin chain that are further elongated or branched by KCMF1.

Its subcellular location is the mitochondrion. The protein localises to the mitochondrion outer membrane. It is found in the mitochondrion inner membrane. The protein resides in the cytoplasm. It localises to the cytosol. Its function is as follows. Protein kinase activator that acts as a key activator of the integrated stress response (ISR) following various stresses, such as iron deficiency, mitochondrial stress or mitochondrial DNA breaks. Detects impaired protein import and processing in mitochondria, activating the ISR. May also required for the induction of death receptor-mediated apoptosis through the regulation of caspase activation. Protein kinase activator that activates the ISR in response to iron deficiency: iron deficiency impairs mitochondrial import, promoting DELE1 localization at the mitochondrial surface, where it binds and activates EIF2AK1/HRI to trigger the ISR. Functionally, protein kinase activator generated by protein cleavage in response to mitochondrial stress, which accumulates in the cytosol and specifically binds to and activates the protein kinase activity of EIF2AK1/HRI. It thereby activates the integrated stress response (ISR): EIF2AK1/HRI activation promotes eIF-2-alpha (EIF2S1) phosphorylation, leading to a decrease in global protein synthesis and the induction of selected genes, including the transcription factor ATF4, the master transcriptional regulator of the ISR. Also acts as an activator of PRKN-independent mitophagy: activates the protein kinase activity of EIF2AK1/HRI in response to mitochondrial damage, promoting eIF-2-alpha (EIF2S1) phosphorylation, leading to mitochondrial localization of EIF2S1 followed by induction of mitophagy. In Rattus norvegicus (Rat), this protein is DAP3-binding cell death enhancer 1.